The primary structure comprises 794 residues: Signal transducer and activator of transcription 5A (794 aa).

Y90 is subject to Phosphotyrosine. At S128 the chain carries Phosphoserine. Positions 589–686 constitute an SH2 domain; that stretch reads WNDGAILGFV…EVFSKYYTPV (98 aa). Position 682 is a phosphotyrosine (Y682). Residue Y694 is modified to Phosphotyrosine; by JAK2. The interval 771 to 794 is disordered; that stretch reads PMDSLEPSLPPPTGLFTPGRGSLS.

This sequence belongs to the transcription factor STAT family. As to quaternary structure, forms a homodimer or a heterodimer with a related family member. Binds NR3C1. Interacts with NCOA1 and SOCS7. Interacts with ERBB4. Interacts with EBF4. Interacts with CD69. Post-translationally, ISGylated. In terms of processing, tyrosine phosphorylated in response to KITLG/SCF, IL2, IL3, IL7, IL15, CSF2/GMCSF, GH1, PRL, EPO and THPO. Activated KIT promotes phosphorylation on tyrosine residues and subsequent translocation to the nucleus. Tyrosine phosphorylated in response to constitutively activated FGFR1, FGFR2, FGFR3 and FGFR4. Tyrosine phosphorylation is required for DNA-binding activity and dimerization. Serine phosphorylation is also required for maximal transcriptional activity. Tyrosine phosphorylated in response to signaling via activated FLT3; wild-type FLT3 results in much weaker phosphorylation than constitutively activated mutant FLT3. Alternatively, can be phosphorylated by JAK2 at Tyr-694.

The protein localises to the cytoplasm. Its subcellular location is the nucleus. Carries out a dual function: signal transduction and activation of transcription. Mediates cellular responses to the cytokine KITLG/SCF and other growth factors. May mediate cellular responses to activated FGFR1, FGFR2, FGFR3 and FGFR4. Binds to the GAS element and activates PRL-induced transcription. Regulates the expression of milk proteins during lactation. The chain is Signal transducer and activator of transcription 5A (STAT5A) from Bos taurus (Bovine).